We begin with the raw amino-acid sequence, 530 residues long: Estrogen receptor beta (530 aa).

The tract at residues methionine 1–phenylalanine 148 is modulating. Serine 61 carries the post-translational modification Phosphoserine; alternate. An O-linked (GlcNAc) serine; alternate glycan is attached at serine 61. Phosphoserine; by MAPK is present on residues serine 87 and serine 105. NR C4-type zinc fingers lie at residues cysteine 149–cysteine 169 and cysteine 185–cysteine 209. Positions cysteine 149 to methionine 214 form a DNA-binding region, nuclear receptor. The 235-residue stretch at serine 264–histidine 498 folds into the NR LBD domain. The tract at residues isoleucine 507–proline 530 is disordered. Residues threonine 521 to proline 530 show a composition bias toward polar residues.

This sequence belongs to the nuclear hormone receptor family. NR3 subfamily. As to quaternary structure, binds DNA as a homodimer. Can form a heterodimer with ESR1. Interacts with NCOA1, NCOA3, NCOA5 and NCOA6 coactivators, leading to a strong increase of transcription of target genes. Interacts with UBE1C and AKAP13. Interacts with DNTTIP2. Interacts with CCDC62 in the presence of estradiol/E2; this interaction seems to enhance the transcription of target genes. Interacts with DNAAF4. Interacts with PRMT2. Interacts with CCAR2 (via N-terminus) in a ligand-independent manner. Interacts with RBM39, in the presence of estradiol (E2). Interacts with STUB1/CHIP. Phosphorylation at Ser-87 and Ser-105 recruits NCOA1.

It is found in the nucleus. Nuclear hormone receptor. Binds estrogens with an affinity similar to that of ESR1/ER-alpha, and activates expression of reporter genes containing estrogen response elements (ERE) in an estrogen-dependent manner. In Callithrix jacchus (White-tufted-ear marmoset), this protein is Estrogen receptor beta (ESR2).